Reading from the N-terminus, the 291-residue chain is Pyridoxal 5'-phosphate synthase subunit PdxS (291 aa).

D23 contacts D-ribose 5-phosphate. K80 serves as the catalytic Schiff-base intermediate with D-ribose 5-phosphate. G152 provides a ligand contact to D-ribose 5-phosphate. R164 is a D-glyceraldehyde 3-phosphate binding site. D-ribose 5-phosphate contacts are provided by residues G213 and 234–235 (GS).

Belongs to the PdxS/SNZ family. In the presence of PdxT, forms a dodecamer of heterodimers.

The catalysed reaction is aldehydo-D-ribose 5-phosphate + D-glyceraldehyde 3-phosphate + L-glutamine = pyridoxal 5'-phosphate + L-glutamate + phosphate + 3 H2O + H(+). Its pathway is cofactor biosynthesis; pyridoxal 5'-phosphate biosynthesis. Catalyzes the formation of pyridoxal 5'-phosphate from ribose 5-phosphate (RBP), glyceraldehyde 3-phosphate (G3P) and ammonia. The ammonia is provided by the PdxT subunit. Can also use ribulose 5-phosphate and dihydroxyacetone phosphate as substrates, resulting from enzyme-catalyzed isomerization of RBP and G3P, respectively. This chain is Pyridoxal 5'-phosphate synthase subunit PdxS, found in Haemophilus influenzae (strain PittGG).